We begin with the raw amino-acid sequence, 252 residues long: 14-3-3 protein 10 (252 aa).

It belongs to the 14-3-3 family. As to quaternary structure, homodimer.

This Solanum lycopersicum (Tomato) protein is 14-3-3 protein 10 (TFT10).